The sequence spans 258 residues: Ribonuclease PH (258 aa).

Phosphate is bound by residues arginine 88 and 126-128 (GTR).

Belongs to the RNase PH family. In terms of assembly, homohexameric ring arranged as a trimer of dimers.

The enzyme catalyses tRNA(n+1) + phosphate = tRNA(n) + a ribonucleoside 5'-diphosphate. In terms of biological role, phosphorolytic 3'-5' exoribonuclease that plays an important role in tRNA 3'-end maturation. Removes nucleotide residues following the 3'-CCA terminus of tRNAs; can also add nucleotides to the ends of RNA molecules by using nucleoside diphosphates as substrates, but this may not be physiologically important. Probably plays a role in initiation of 16S rRNA degradation (leading to ribosome degradation) during starvation. This Mycobacteroides abscessus (strain ATCC 19977 / DSM 44196 / CCUG 20993 / CIP 104536 / JCM 13569 / NCTC 13031 / TMC 1543 / L948) (Mycobacterium abscessus) protein is Ribonuclease PH.